The following is a 404-amino-acid chain: Sulfate adenylyltransferase (404 aa).

The protein belongs to the sulfate adenylyltransferase family.

It carries out the reaction sulfate + ATP + H(+) = adenosine 5'-phosphosulfate + diphosphate. Its pathway is sulfur metabolism; hydrogen sulfide biosynthesis; sulfite from sulfate: step 1/3. This chain is Sulfate adenylyltransferase, found in Chlorobium chlorochromatii (strain CaD3).